The sequence spans 408 residues: MRSSCVLLTALLALAAYYIYIPLPSSVSDPWKLMLLDATFRSAQQVSNLIHFLGLSHHLLALNFIIVSFGKKSAWSSAQVKVTDTDFDGVEVRVFEGPPKPEEPLKRSIVYIHGGGWALASAKIRYYDELCTTMAEELNAVIVSIEYRLVPKVYFPEQIHDVVHATKYFLQPEVLHKYSVDPGRVGISGDSAGGNLAAALGQQFNQDTNLKNKLKVQALIYPVLQALDFNTPSYQQNMNTPILPRYVMVKYWVDYFNGNYDFVQAMIVNNHTSLDVDEASALRARLNWTSLLPTSITKNYKPVMQTTGNSRIVQEIPQLLDARSAPLIADQEVLQHLPKTYILTCEHDVLRDDGIMYAKRLESAGVEVTLDHFEDGFHGCMIFTSWPTNFSVGIRTRNSYIKWLDQNL.

Residues 1 to 4 are Cytoplasmic-facing; the sequence is MRSS. The chain crosses the membrane as a helical; Signal-anchor for type II membrane protein span at residues 5-25; the sequence is CVLLTALLALAAYYIYIPLPS. Topologically, residues 26–408 are lumenal; the sequence is SVSDPWKLML…SYIKWLDQNL (383 aa). The short motif at 113–115 is the Involved in the stabilization of the negatively charged intermediate by the formation of the oxyanion hole element; sequence HGG. Residue S191 is part of the active site. N-linked (GlcNAc...) asparagine glycosylation is found at N270 and N287. Residues D348 and H378 contribute to the active site. A glycan (N-linked (GlcNAc...) asparagine) is linked at N389.

Belongs to the 'GDXG' lipolytic enzyme family. Post-translationally, N-glycosylated.

The protein localises to the cell membrane. The protein resides in the microsome. The enzyme catalyses a 1-O-alkyl-2-acetyl-sn-glycerol + H2O = a 1-O-alkyl-sn-glycerol + acetate + H(+). The catalysed reaction is 1-O-hexadecyl-2-acetyl-sn-glycerol + H2O = 1-O-hexadecyl-sn-glycerol + acetate + H(+). It catalyses the reaction a cholesterol ester + H2O = cholesterol + a fatty acid + H(+). It carries out the reaction cholesteryl (9Z-octadecenoate) + H2O = cholesterol + (9Z)-octadecenoate + H(+). In terms of biological role, hydrolyzes 2-acetyl monoalkylglycerol ether (1-O-alkyl-2-acetyl-sn-glycerol), the penultimate precursor of the pathway for de novo synthesis of platelet-activating factor. May be responsible for the hydrolysis of cholesterol esters (such as cholesteryl (9Z-octadecenoate)) in macrophages. Also involved in organ detoxification by hydrolyzing exogenous organophosphorus compounds. In Bos taurus (Bovine), this protein is Neutral cholesterol ester hydrolase 1 (NCEH1).